The chain runs to 340 residues: Cytoskeleton protein RodZ (340 aa).

The Cytoplasmic segment spans residues 1–111 (MNTEATQEKS…LGKQRKKRDG (111 aa)). The HTH cro/C1-type domain occupies 19–79 (LRTAREQMGL…RLVHVPEEEL (61 aa)). The H-T-H motif DNA-binding region spans 30-49 (QQNVAERLCLKLSTIRDIEE). A helical; Signal-anchor for type II membrane protein transmembrane segment spans residues 112–132 (WLMIFTWLVLFVVLGLTGAWW). Residues 133-340 (WQNHKAAQDD…QVARLTVGAP (208 aa)) are Periplasmic-facing. Residues 162 to 252 (ALSDDNANGG…AAPLPTGSAA (91 aa)) are disordered. The span at 183–201 (ATANNAPSSVTATSDNGTP) shows a compositional bias: polar residues. The span at 202-233 (AATAQSSQVTASNAAPAANAVNDNTPPVAVAP) shows a compositional bias: low complexity.

This sequence belongs to the RodZ family.

Its subcellular location is the cell inner membrane. Functionally, cytoskeletal protein that is involved in cell-shape control through regulation of the length of the long axis. The polypeptide is Cytoskeleton protein RodZ (Erwinia tasmaniensis (strain DSM 17950 / CFBP 7177 / CIP 109463 / NCPPB 4357 / Et1/99)).